A 281-amino-acid chain; its full sequence is Pantothenate synthetase (281 aa).

30–37 (MGNLHQGH) contributes to the ATP binding site. The active-site Proton donor is the His-37. Gln-61 contacts (R)-pantoate. Residue Gln-61 participates in beta-alanine binding. 149 to 152 (GNKD) serves as a coordination point for ATP. A (R)-pantoate-binding site is contributed by Gln-155. Residues Ile-178 and 186-189 (MSSR) contribute to the ATP site.

The protein belongs to the pantothenate synthetase family. Homodimer.

Its subcellular location is the cytoplasm. It carries out the reaction (R)-pantoate + beta-alanine + ATP = (R)-pantothenate + AMP + diphosphate + H(+). The protein operates within cofactor biosynthesis; (R)-pantothenate biosynthesis; (R)-pantothenate from (R)-pantoate and beta-alanine: step 1/1. In terms of biological role, catalyzes the condensation of pantoate with beta-alanine in an ATP-dependent reaction via a pantoyl-adenylate intermediate. The sequence is that of Pantothenate synthetase from Shewanella sp. (strain ANA-3).